The following is a 162-amino-acid chain: Ribosome maturation factor RimP (162 aa).

Belongs to the RimP family.

It localises to the cytoplasm. In terms of biological role, required for maturation of 30S ribosomal subunits. In Cupriavidus taiwanensis (strain DSM 17343 / BCRC 17206 / CCUG 44338 / CIP 107171 / LMG 19424 / R1) (Ralstonia taiwanensis (strain LMG 19424)), this protein is Ribosome maturation factor RimP.